A 459-amino-acid chain; its full sequence is Cysteine--tRNA ligase (459 aa).

Cysteine 28 contacts Zn(2+). Positions 30–40 (ITVYDLCHVGH) match the 'HIGH' region motif. Zn(2+) contacts are provided by cysteine 209, histidine 234, and glutamate 238. Residues 266-270 (KMSKS) carry the 'KMSKS' region motif. Lysine 269 provides a ligand contact to ATP.

It belongs to the class-I aminoacyl-tRNA synthetase family. In terms of assembly, monomer. It depends on Zn(2+) as a cofactor.

The protein localises to the cytoplasm. The catalysed reaction is tRNA(Cys) + L-cysteine + ATP = L-cysteinyl-tRNA(Cys) + AMP + diphosphate. The chain is Cysteine--tRNA ligase (cysS) from Pasteurella multocida (strain Pm70).